Reading from the N-terminus, the 474-residue chain is MAYTQSKSQKVGYQAGVKDYRLTYYTPDYTPKDTDILAAFRVTPQPGVPFEEAAAAVAAESSTGTWTTVWTDLLTDLDRYKGRCYDIEPLPGEDNQFIAYIAYPLDLFEEGSVTNMLTSIVGNVFGFKALKALRLEDLRIPVAYLKTFQGPPHGIQVERDKLNKYGRPLLGCTIKPKLGLSAKNYGRAVYECLRGGLDFTKDDENINSQPFQRWRDRFLFVADAIHKAQAETGEIKGHYLNVTAPTCEEMLKRAEFAKDWNAIIMHDFLTAGFTANTTLSKGCRDNGMLLHIHRAMHAVMDRQKNHGIHFRVLAKCLRMSGGDHIHTGTVVGKLEGDKAVTLGFVDLLRENYIEQDRSRGIYFTQDWASMPGVMAVASGGIHVWHMPALVDIFGDDAVLQFGGGTLGHPWGNAPGATANRVALEACIQARNEGRDLMREGGDIIREAARWSPELAAACELWKEIKFEFEAQDTI.

Substrate-binding residues include N123 and T173. K175 functions as the Proton acceptor in the catalytic mechanism. K177 contacts substrate. Mg(2+) is bound by residues K201, D203, and E204. K201 bears the N6-carboxylysine mark. The active-site Proton acceptor is H293. Substrate is bound by residues R294, H326, and S378.

Belongs to the RuBisCO large chain family. Type I subfamily. In terms of assembly, heterohexadecamer of 8 large chains and 8 small chains; disulfide-linked. The disulfide link is formed within the large subunit homodimers. It depends on Mg(2+) as a cofactor. Post-translationally, the disulfide bond which can form in the large chain dimeric partners within the hexadecamer appears to be associated with oxidative stress and protein turnover.

It localises to the carboxysome. The catalysed reaction is 2 (2R)-3-phosphoglycerate + 2 H(+) = D-ribulose 1,5-bisphosphate + CO2 + H2O. It catalyses the reaction D-ribulose 1,5-bisphosphate + O2 = 2-phosphoglycolate + (2R)-3-phosphoglycerate + 2 H(+). Its function is as follows. RuBisCO catalyzes two reactions: the carboxylation of D-ribulose 1,5-bisphosphate, the primary event in carbon dioxide fixation, as well as the oxidative fragmentation of the pentose substrate in the photorespiration process. Both reactions occur simultaneously and in competition at the same active site. This chain is Ribulose bisphosphate carboxylase large chain, found in Synechococcus sp.